Here is a 217-residue protein sequence, read N- to C-terminus: Superoxide dismutase [Cu-Zn], chloroplastic (217 aa).

A chloroplast-targeting transit peptide spans 1–63 (MAAHSIFTTT…TTPKPLTVFA (63 aa)). Positions 109, 111, and 126 each coordinate Cu cation. Residues cysteine 120 and cysteine 209 are joined by a disulfide bond. Zn(2+) is bound by residues histidine 126, histidine 134, histidine 143, and aspartate 146. Histidine 183 is a Cu cation binding site.

It belongs to the Cu-Zn superoxide dismutase family. Homotetramer. Cu cation serves as cofactor. Requires Zn(2+) as cofactor.

Its subcellular location is the plastid. The protein localises to the chloroplast. It carries out the reaction 2 superoxide + 2 H(+) = H2O2 + O2. Functionally, destroys radicals which are normally produced within the cells and which are toxic to biological systems. The protein is Superoxide dismutase [Cu-Zn], chloroplastic (SODCP.2) of Solanum lycopersicum (Tomato).